We begin with the raw amino-acid sequence, 1523 residues long: Rho GTPase-activating protein gacHH (1523 aa).

Kelch repeat units lie at residues 30–76, 83–133, and 135–184; these read DIVI…YGHS, KMFV…LIYD, and YILI…DISP. 2 stretches are compositionally biased toward polar residues: residues 161–173 and 184–194; these read NSWT…SSTG and PRSSTTTPTHQ. Residues 161 to 256 are disordered; sequence NSWTKPSSNS…GGSPMTTPPT (96 aa). Low complexity predominate over residues 195-211; it reads SVNGSNSNSSSSSRVRS. The span at 212–221 shows a compositional bias: polar residues; the sequence is ATISSHNNSP. The span at 227–244 shows a compositional bias: low complexity; that stretch reads NNNNNNNNNSNNSNNSNN. 3 Kelch repeats span residues 335 to 384, 386 to 441, and 443 to 496; these read KAFI…AIGS, LFIF…PISS, and ILII…PITS. Disordered stretches follow at residues 510-569, 609-631, and 647-671; these read LPHL…DNIN, QSID…VSND, and NKNN…NSGS. Residues 615–626 are compositionally biased toward gly residues; that stretch reads GGSGGGSGGGNG. Residues 690–729 are a coiled coil; sequence CIKKYNSLKDSYLELKQKYQEEREKRLELEKELERYRLSS. A disordered region spans residues 748–786; sequence NINSNNSTTTTTTTTTTTTTPIPLSTSNNNNNNNNNSTL. A coiled-coil region spans residues 812 to 840; sequence YEKRVKWKENTEKEANQQLEVIKSKIDLF. Disordered stretches follow at residues 861-881, 905-927, 963-991, 1006-1096, and 1143-1194; these read SENI…QNPQ, LTPR…PIPL, TPQK…SKST, SGHF…RLGK, and NGAN…SERI. Residues 870–881 are compositionally biased toward low complexity; the sequence is QQQQQQQQQNPQ. The span at 905-915 shows a compositional bias: basic and acidic residues; sequence LTPRKSRENSV. Composition is skewed to low complexity over residues 971-981, 1012-1030, 1043-1079, and 1143-1153; these read PQQQQQQQPPQ, SSSN…FSNN, QHQQ…LQTQ, and NGANNLGGLVL. Positions 1151–1228 form a coiled coil; the sequence is LVLTSDKEKE…KKHKKIKGLF (78 aa). A compositionally biased stretch (basic and acidic residues) spans 1155-1194; the sequence is SDKEKEKLEKEREKSERIEREKQEKEREKLEKEREKSERI. The 179-residue stretch at 1233–1411 folds into the Rho-GAP domain; that stretch reads SNKESLPFRR…TFIEDFHYIF (179 aa). The segment at 1425–1482 is disordered; it reads DDDYDSSSFGSNNTPSSHSPHSSSPTLNPAVTTTTTTTTTTNTTTTTNTTTTPTSATI. Low complexity predominate over residues 1430–1476; that stretch reads SSSFGSNNTPSSHSPHSSSPTLNPAVTTTTTTTTTTNTTTTTNTTTT.

The protein localises to the cytoplasm. Its function is as follows. Rho GTPase-activating protein involved in the signal transduction pathway. The protein is Rho GTPase-activating protein gacHH (gacHH) of Dictyostelium discoideum (Social amoeba).